The sequence spans 535 residues: Flavin-containing monooxygenase iboF (535 aa).

The N-terminal stretch at 1–24 (MFSLRPTALVSLSVVLFSIQETLS) is a signal peptide. Position 60-65 (60-65 (GAGPSG)) interacts with FAD. Residues Asn-134, Asn-243, and Asn-300 are each glycosylated (N-linked (GlcNAc...) asparagine). Position 307 to 312 (307 to 312 (GAAASG)) interacts with NADP(+). N-linked (GlcNAc...) asparagine glycans are attached at residues Asn-356, Asn-382, and Asn-410.

This sequence belongs to the FMO family. FAD serves as cofactor.

It functions in the pathway secondary metabolite biosynthesis. Its function is as follows. Flavin-containing monooxygenase; part of the gene cluster that mediates the biosynthesis of the psychoactive metabolites ibotenic acid and muscimol. The first committed step is glutamate hydroxylation by the 2-oxoglutarate-dependent dioxygenase iboH, and the last step is decarboxylation of ibotenic acid to muscimol by the decarboxylase iboD. The order of the intermediate reactions is somewhat ambiguous. IboA likely activates the carboxylic acid at position 5 to introduce an amide bond, and the flavin monooxygenase iboF generates the N-O bond. There are several options for the latter step. One option is that iboF directly hydroxylates the amide nitrogen formed by iboA to produce a hydroxamic acid species. Another option is that iboF hydroxylates an external N-containing compound, whose resulting N-O bond is subsequently introduced into the hydroxyglutamate scaffold. The paralogous PLP-dependent cystathionine gamma-synthase-like enzymes iboG1 and iboG2 are likely involved in substitution of the OH group at position 3 by the O-N moiety. The first cyclic intermediate is most probably tricholomic acid which is likely desaturated to ibotenic acid by the cytochrome P450 monooxygenase iboC. This chain is Flavin-containing monooxygenase iboF, found in Amanita muscaria (strain Koide BX008).